Reading from the N-terminus, the 448-residue chain is Glutamyl-tRNA reductase (448 aa).

Residues 48–51 (TCNR), Ser100, 105–107 (EDQ), and Gln111 each bind substrate. Cys49 serves as the catalytic Nucleophile. 180–185 (GAGEIG) contributes to the NADP(+) binding site.

This sequence belongs to the glutamyl-tRNA reductase family. Homodimer.

The enzyme catalyses (S)-4-amino-5-oxopentanoate + tRNA(Glu) + NADP(+) = L-glutamyl-tRNA(Glu) + NADPH + H(+). It participates in porphyrin-containing compound metabolism; protoporphyrin-IX biosynthesis; 5-aminolevulinate from L-glutamyl-tRNA(Glu): step 1/2. In terms of biological role, catalyzes the NADPH-dependent reduction of glutamyl-tRNA(Glu) to glutamate 1-semialdehyde (GSA). The sequence is that of Glutamyl-tRNA reductase from Methanosarcina mazei (strain ATCC BAA-159 / DSM 3647 / Goe1 / Go1 / JCM 11833 / OCM 88) (Methanosarcina frisia).